The sequence spans 295 residues: GATA transcription factor 18 (295 aa).

The GATA-type zinc finger occupies 148–202; the sequence is SLLARRCANCDTTSTPLWRNGPRGPKSLCNACGIRFKKEERRTTAATGNTVVGAA.

This sequence belongs to the type IV zinc-finger family. Class B subfamily. As to quaternary structure, homodimer. Forms heterodimers with GATA19, GATA22 and GATA21. Interacts with JAG. Binds to AGO10/PNH. Expressed in vegetative and inflorescence shoot apical meristems (SAMs), axillary (SAMs), floral meristems, developing ovules and stamens, vascular tissues, and in the embryo.

The protein localises to the nucleus. Its function is as follows. Transcriptional factor that specifically binds 5'-GATA-3' or 5'-GAT-3' motifs within gene promoters (including its own promoter and GATA21 promoter), thus regulating the expression of genes mostly involved in hormone responses and floral organ specification (including genes regulating hormones responses). Regulates both flower and shoot apical meristem (SAM) development, especially for establishing organ boundaries in shoots and flowers, probably by controlling the number and position of WUS-expressing cells. Coregulates, with AGO10/PNH, the shoot apical meristem (SAM) organization. Regulates floral organ development via the promotion of JAG and NPR5/BOP2 expression. Modulates cytokinin homeostasis in organ boundaries by regulating CKX3 expression. Involved in cell proliferation and differentiation. Required to position the inductive proembryo boundary via the regulation of gene expression and for early embryonic development. Together with GIF1/AN3, mediates cotyledon identity by preventing ectopic root formation through the repression of PLT1 expression. This chain is GATA transcription factor 18, found in Arabidopsis thaliana (Mouse-ear cress).